Consider the following 488-residue polypeptide: Probable glycine dehydrogenase (decarboxylating) subunit 2 (488 aa).

An N6-(pyridoxal phosphate)lysine modification is found at lysine 274.

Belongs to the GcvP family. C-terminal subunit subfamily. In terms of assembly, the glycine cleavage system is composed of four proteins: P, T, L and H. In this organism, the P 'protein' is a heterodimer of two subunits. Requires pyridoxal 5'-phosphate as cofactor.

The catalysed reaction is N(6)-[(R)-lipoyl]-L-lysyl-[glycine-cleavage complex H protein] + glycine + H(+) = N(6)-[(R)-S(8)-aminomethyldihydrolipoyl]-L-lysyl-[glycine-cleavage complex H protein] + CO2. Its function is as follows. The glycine cleavage system catalyzes the degradation of glycine. The P protein binds the alpha-amino group of glycine through its pyridoxal phosphate cofactor; CO(2) is released and the remaining methylamine moiety is then transferred to the lipoamide cofactor of the H protein. The sequence is that of Probable glycine dehydrogenase (decarboxylating) subunit 2 from Listeria innocua serovar 6a (strain ATCC BAA-680 / CLIP 11262).